We begin with the raw amino-acid sequence, 261 residues long: Calbindin (261 aa).

A2 carries the post-translational modification N-acetylalanine. Positions 2–7 (AESHLQ) are interaction with RANBP9. 5 EF-hand domains span residues 11–46 (ITAS…LQQA), 53–88 (ELSP…EENF), 98–133 (KSCE…LLEK), 142–177 (KLAE…QENF), and 186–221 (MCGK…LCEK). 5 residues coordinate Ca(2+): D24, D26, S28, Y30, and E35. 13 residues coordinate Ca(2+): D111, D113, E122, D155, N157, D159, K161, E166, D199, D201, N203, Y205, and E210.

The protein belongs to the calbindin family. As to quaternary structure, interacts with RANBP9.

Its function is as follows. Buffers cytosolic calcium. May stimulate a membrane Ca(2+)-ATPase and a 3',5'-cyclic nucleotide phosphodiesterase. This Pongo abelii (Sumatran orangutan) protein is Calbindin (CALB1).